Reading from the N-terminus, the 479-residue chain is Transcript termination protein A18 (479 aa).

In terms of domain architecture, Helicase ATP-binding spans 99–255 (KNKHKRPTYI…NDIINVSNSL (157 aa)). Residue 112–119 (LACGFGKT) coordinates ATP. Positions 205-208 (DESH) match the DESH box motif. The 162-residue stretch at 308 to 469 (ILDTIIYDFN…EKKGKKKELA (162 aa)) folds into the Helicase C-terminal domain.

Belongs to the helicase family. Poxviruses subfamily. Interacts with G2. Might be part of a transcription complex composed at least of G2, A18, and H5.

The protein resides in the virion. Functionally, DNA helicase which seems to act as a postreplicative transcription termination factor. Involved in ATP-dependent release of nascent RNA. Forms a stable complex with single-stranded DNA, and to a lesser extent RNA. This is Transcript termination protein A18 from Homo sapiens (Human).